The sequence spans 421 residues: Imidazolonepropionase (421 aa).

2 residues coordinate Fe(3+): histidine 81 and histidine 83. Histidine 81 and histidine 83 together coordinate Zn(2+). 3 residues coordinate 4-imidazolone-5-propanoate: arginine 90, tyrosine 153, and histidine 186. Tyrosine 153 is a binding site for N-formimidoyl-L-glutamate. Histidine 251 contributes to the Fe(3+) binding site. Histidine 251 is a binding site for Zn(2+). Glutamate 254 serves as a coordination point for 4-imidazolone-5-propanoate. Aspartate 326 contributes to the Fe(3+) binding site. Aspartate 326 provides a ligand contact to Zn(2+). Positions 328 and 330 each coordinate N-formimidoyl-L-glutamate. Serine 331 contributes to the 4-imidazolone-5-propanoate binding site.

The protein belongs to the metallo-dependent hydrolases superfamily. HutI family. Zn(2+) is required as a cofactor. Fe(3+) serves as cofactor.

It is found in the cytoplasm. It carries out the reaction 4-imidazolone-5-propanoate + H2O = N-formimidoyl-L-glutamate. The protein operates within amino-acid degradation; L-histidine degradation into L-glutamate; N-formimidoyl-L-glutamate from L-histidine: step 3/3. Its function is as follows. Catalyzes the hydrolytic cleavage of the carbon-nitrogen bond in imidazolone-5-propanoate to yield N-formimidoyl-L-glutamate. It is the third step in the universal histidine degradation pathway. The chain is Imidazolonepropionase from Streptococcus pyogenes serotype M4 (strain MGAS10750).